The primary structure comprises 690 residues: eEF1A lysine and N-terminal methyltransferase (690 aa).

Residues 427–451 (AAASSASKKKNKKKAKQPASTGAKD) form a disordered region. The span at 433–442 (SKKKNKKKAK) shows a compositional bias: basic residues.

Belongs to the methyltransferase superfamily.

The enzyme catalyses L-lysyl-[protein] + S-adenosyl-L-methionine = N(6)-methyl-L-lysyl-[protein] + S-adenosyl-L-homocysteine + H(+). It carries out the reaction N(6)-methyl-L-lysyl-[protein] + S-adenosyl-L-methionine = N(6),N(6)-dimethyl-L-lysyl-[protein] + S-adenosyl-L-homocysteine + H(+). It catalyses the reaction N-terminal glycyl-L-lysyl-L-glutamyl-[protein] + 3 S-adenosyl-L-methionine = N-terminal N,N,N-trimethyl-glycyl-L-lysyl-L-glutamyl-[protein] + 3 S-adenosyl-L-homocysteine + 3 H(+). Dual methyltransferase that catalyzes methylation of elongation factor 1-alpha (eef1a1 and eef1a2) at two different positions, and is therefore involved in the regulation of mRNA translation. Via its C-terminus, methylates the N-terminus of eef1a1 and eef1a2. Via its N-terminus dimethylates lysine residues of eef1a1 and eef1a2. This Danio rerio (Zebrafish) protein is eEF1A lysine and N-terminal methyltransferase (mettl13).